We begin with the raw amino-acid sequence, 164 residues long: Thiol peroxidase (164 aa).

In terms of domain architecture, Thioredoxin spans 18–163; the sequence is INEGDFAPDF…FDAALAAYKN (146 aa). The active-site Cysteine sulfenic acid (-SOH) intermediate is the cysteine 60. Cysteine 60 and cysteine 93 are joined by a disulfide.

Belongs to the peroxiredoxin family. Tpx subfamily. In terms of assembly, homodimer.

It catalyses the reaction a hydroperoxide + [thioredoxin]-dithiol = an alcohol + [thioredoxin]-disulfide + H2O. Functionally, thiol-specific peroxidase that catalyzes the reduction of hydrogen peroxide and organic hydroperoxides to water and alcohols, respectively. Plays a role in cell protection against oxidative stress by detoxifying peroxides. This Staphylococcus aureus (strain COL) protein is Thiol peroxidase.